A 565-amino-acid polypeptide reads, in one-letter code: NAD-dependent malic enzyme (565 aa).

The Proton donor role is filled by Tyr-104. Arg-157 serves as a coordination point for NAD(+). Lys-175 (proton acceptor) is an active-site residue. A divalent metal cation-binding residues include Glu-246, Asp-247, and Asp-270. NAD(+) is bound by residues Asp-270 and Asn-418.

It belongs to the malic enzymes family. Homotetramer. Requires Mg(2+) as cofactor. It depends on Mn(2+) as a cofactor.

The enzyme catalyses (S)-malate + NAD(+) = pyruvate + CO2 + NADH. It carries out the reaction oxaloacetate + H(+) = pyruvate + CO2. The sequence is that of NAD-dependent malic enzyme from Serratia proteamaculans (strain 568).